A 402-amino-acid polypeptide reads, in one-letter code: MASIIARVGNSRRLNAPLPPWAHSMLRSLGRSLGPIMASMADRNMKLFSGRVVPAQGEETFENWLTQVNGVLPDWNMSEEEKLKRLMKTLRGPAREVMRVLQATNPNLSVADFLRAMKLVFGESESSVTAHGKFFNTLQAQGEKASLYVIRLEVQLQNAIQAGIIAEKDANRTRLQQLLLGGELSRDLRLRLKDFLRMYANEQERLPNFLELIRMVREEEDWDDAFIKRKRPKRSESMVERAVSPVAFQGSPPIVIGSADCNVIEIDDTLDDSDEDVILVESQDPPLPSWGAPPLRDRARPQDEVLVIDSPHNSRAQFPSTSGGSGYKNNGPGEMRRARKRKHTIRCSYCGEEGHSKETCDNESDKAQVFENLIITLQELTHTEMERSRVAPGEYNDFSEPL.

A disordered region spans residues I308–R341. Over residues P311–S322 the composition is skewed to polar residues. A CCHC-type zinc finger spans residues I345–N362.

It belongs to the ZCCHC12 family. As to quaternary structure, interacts with SMAD1 and CREB-binding protein (CBP). Forms a protein-DNA complex through its association with SMAD1.

Its function is as follows. Transcriptional coactivator in the bone morphogenetic protein (BMP)-signaling pathway. It positively modulates BMP signaling by interacting with SMAD1 and associating with CBP in the transcription complex. It contributes to the BMP-induced enhancement of cholinergic-neuron-specific gene expression. In Homo sapiens (Human), this protein is Zinc finger CCHC domain-containing protein 12 (ZCCHC12).